Consider the following 155-residue polypeptide: Small ribosomal subunit protein uS9 (155 aa).

Belongs to the universal ribosomal protein uS9 family.

This is Small ribosomal subunit protein uS9 from Rhizobium etli (strain CIAT 652).